Consider the following 293-residue polypeptide: Ribosomal protein L11 methyltransferase (293 aa).

Threonine 145, glycine 166, aspartate 188, and asparagine 230 together coordinate S-adenosyl-L-methionine.

The protein belongs to the methyltransferase superfamily. PrmA family.

The protein resides in the cytoplasm. The catalysed reaction is L-lysyl-[protein] + 3 S-adenosyl-L-methionine = N(6),N(6),N(6)-trimethyl-L-lysyl-[protein] + 3 S-adenosyl-L-homocysteine + 3 H(+). In terms of biological role, methylates ribosomal protein L11. The sequence is that of Ribosomal protein L11 methyltransferase from Shewanella denitrificans (strain OS217 / ATCC BAA-1090 / DSM 15013).